The following is a 132-amino-acid chain: MTMTDPIADFLTRLRNANSAYHDEVTLPHSKIKANIAEILKSEGYISDYRTEDARVGKSLVVQLKYGPSRERSIAGLRRVSKPGLRVYAKSTNLPRVLGGLGVAIISTSSGLLTDRQAARSGVGGEVLAYVW.

Belongs to the universal ribosomal protein uS8 family. As to quaternary structure, part of the 30S ribosomal subunit. Contacts proteins S5 and S12.

Functionally, one of the primary rRNA binding proteins, it binds directly to 16S rRNA central domain where it helps coordinate assembly of the platform of the 30S subunit. In Mycobacterium sp. (strain KMS), this protein is Small ribosomal subunit protein uS8.